We begin with the raw amino-acid sequence, 38 residues long: Kappa-theraphotoxin-Hm2a (38 aa).

Cystine bridges form between Cys-2–Cys-16, Cys-9–Cys-21, and Cys-15–Cys-32. The residue at position 38 (Phe-38) is a Phenylalanine amide.

Belongs to the neurotoxin 10 (Hwtx-1) family. 13 (Hntx-13) subfamily. In terms of tissue distribution, expressed by the venom gland.

The protein resides in the secreted. Functionally, inhibitor of voltage-gated potassium channels. It specifically inhibits Kv2.1/KCNB1 channels. The polypeptide is Kappa-theraphotoxin-Hm2a (Heteroscodra maculata (Togo starburst tarantula)).